Reading from the N-terminus, the 413-residue chain is Aspartate aminotransferase, cytoplasmic (413 aa).

Gly-39, Trp-141, and Asn-195 together coordinate L-aspartate. Position 259 is an N6-(pyridoxal phosphate)lysine (Lys-259). Arg-387 lines the L-aspartate pocket.

Belongs to the class-I pyridoxal-phosphate-dependent aminotransferase family. In terms of assembly, homodimer. Pyridoxal 5'-phosphate is required as a cofactor.

It is found in the cytoplasm. The enzyme catalyses L-aspartate + 2-oxoglutarate = oxaloacetate + L-glutamate. It catalyses the reaction L-cysteine + 2-oxoglutarate = 2-oxo-3-sulfanylpropanoate + L-glutamate. The catalysed reaction is (2S)-2-aminobutanoate + 2-oxoglutarate = 2-oxobutanoate + L-glutamate. It carries out the reaction 3-sulfino-L-alanine + 2-oxoglutarate = 3-sulfinopyruvate + L-glutamate. In terms of biological role, biosynthesis of L-glutamate from L-aspartate or L-cysteine. Important regulator of levels of glutamate, the major excitatory neurotransmitter of the vertebrate central nervous system. Acts as a scavenger of glutamate in brain neuroprotection. The aspartate aminotransferase activity is involved in hepatic glucose synthesis during development and in adipocyte glyceroneogenesis. Using L-cysteine as substrate, regulates levels of mercaptopyruvate, an important source of hydrogen sulfide. Mercaptopyruvate is converted into H(2)S via the action of 3-mercaptopyruvate sulfurtransferase (3MST). Hydrogen sulfide is an important synaptic modulator and neuroprotectant in the brain. In Sus scrofa (Pig), this protein is Aspartate aminotransferase, cytoplasmic.